Here is a 124-residue protein sequence, read N- to C-terminus: FK506-binding protein 1 (124 aa).

The PPIase FKBP-type domain occupies 23–122 (GDTVTIHYDG…VFEVELLGVN (100 aa)).

It belongs to the FKBP-type PPIase family. FKBP1 subfamily.

The protein localises to the cytoplasm. It catalyses the reaction [protein]-peptidylproline (omega=180) = [protein]-peptidylproline (omega=0). Its activity is regulated as follows. Inhibited by rapamycin. In terms of biological role, PPIases accelerate the folding of proteins. It catalyzes the cis-trans isomerization of proline imidic peptide bonds in oligopeptides. In Candida albicans (strain SC5314 / ATCC MYA-2876) (Yeast), this protein is FK506-binding protein 1 (RBP1).